A 64-amino-acid polypeptide reads, in one-letter code: Potassium channel toxin kappa-KTx 3.4 (64 aa).

Residues 1 to 26 form the signal peptide; the sequence is MKSTLMTASLLILVLLSIIDYASVYA. A propeptide spanning residues 27-36 is cleaved from the precursor; the sequence is EFIDSEISLE. Cystine bridges form between C43-C61 and C47-C57.

Belongs to the short scorpion toxin superfamily. Potassium channel inhibitor kappa-KTx family. Kappa-KTx 3 subfamily. As to expression, expressed by the venom gland.

Its subcellular location is the secreted. Its function is as follows. Potassium channel inhibitor (Kv). The chain is Potassium channel toxin kappa-KTx 3.4 from Heterometrus petersii (Asian forest scorpion).